The chain runs to 163 residues: Nucleotide-binding protein YajQ (163 aa).

Belongs to the YajQ family.

Functionally, nucleotide-binding protein. The protein is Nucleotide-binding protein YajQ of Escherichia coli O127:H6 (strain E2348/69 / EPEC).